Reading from the N-terminus, the 85-residue chain is Probable oxaloacetate decarboxylase gamma chain (85 aa).

A helical membrane pass occupies residues Ala11–Val33.

Belongs to the OadG family. As to quaternary structure, heterotrimer of an alpha, a beta and a gamma subunit. It depends on Na(+) as a cofactor.

The protein localises to the cell membrane. The enzyme catalyses oxaloacetate + 2 Na(+)(in) + H(+) = pyruvate + 2 Na(+)(out) + CO2. Functionally, catalyzes the decarboxylation of oxaloacetate coupled to Na(+) translocation. In Vibrio vulnificus (strain CMCP6), this protein is Probable oxaloacetate decarboxylase gamma chain.